A 2009-amino-acid chain; its full sequence is Sodium channel protein type 1 subunit alpha (2009 aa).

Residues Met-1–Ser-128 lie on the Cytoplasmic side of the membrane. Basic and acidic residues predominate over residues Arg-28–Gly-48. The disordered stretch occupies residues Arg-28–Asn-60. Residues Ile-110–Gln-454 form an I repeat. Residues Leu-129–Thr-146 form a helical membrane-spanning segment. Residues Met-147–Asp-152 lie on the Extracellular side of the membrane. Residues Trp-153–Gly-177 traverse the membrane as a helical segment. Residues Phe-178 to Asp-188 are Cytoplasmic-facing. Residues Pro-189–Glu-205 form a helical membrane-spanning segment. The Extracellular portion of the chain corresponds to Phe-206–Ser-213. N-linked (GlcNAc...) asparagine glycosylation is present at Asn-211. A helical transmembrane segment spans residues Ala-214–Thr-235. The Cytoplasmic portion of the chain corresponds to Ile-236–Lys-245. Residues Lys-246–Phe-269 form a helical membrane-spanning segment. Topologically, residues Met-270–Ser-369 are extracellular. 2 disulfide bridges follow: Cys-277-Cys-345 and Cys-336-Cys-351. Residues Asn-284, Asn-295, Asn-301, Asn-306, and Asn-338 are each glycosylated (N-linked (GlcNAc...) asparagine). The pore-forming intramembrane region spans Trp-370–Trp-384. Residues Glu-385–Lys-397 are Extracellular-facing. A helical transmembrane segment spans residues Thr-398–Ala-423. Topologically, residues Met-424–Pro-768 are cytoplasmic. The segment at Gln-455–Ile-529 is disordered. Residues Glu-456–Ala-466 show a composition bias toward low complexity. A Phosphoserine modification is found at Ser-470. The segment covering Leu-479 to Lys-492 has biased composition (low complexity). Residues Lys-495–Gln-506 show a composition bias toward basic residues. Basic and acidic residues predominate over residues Phe-520–Ile-529. Residues Ser-523, Ser-525, Ser-550, Ser-551, Ser-607, and Ser-730 each carry the phosphoserine modification. A disordered region spans residues Val-584–Arg-627. Positions Asp-593–Ser-607 are enriched in basic and acidic residues. The stretch at Cys-750–Gly-1022 is one II repeat. A helical membrane pass occupies residues Phe-769–Met-787. Over Glu-788 to Asn-797 the chain is Extracellular. Residues Asn-798–Ile-820 traverse the membrane as a helical segment. The Cytoplasmic portion of the chain corresponds to Ala-821–Glu-830. A helical membrane pass occupies residues Gly-831–Leu-849. The Extracellular segment spans residues Ala-850 to Gly-854. Residues Leu-855–Pro-874 traverse the membrane as a helical segment. The Cytoplasmic segment spans residues Thr-875 to Gly-891. The helical transmembrane segment at Asn-892–Phe-912 threads the bilayer. Over Gly-913–Phe-938 the chain is Extracellular. Cysteines 921 and 927 form a disulfide. Positions His-939 to Trp-952 form an intramembrane region, pore-forming. Residues Ile-953–Gln-965 are Extracellular-facing. Cysteines 959 and 968 form a disulfide. Residues Ala-966–Leu-992 form a helical membrane-spanning segment. At Ser-993–Asn-1218 the chain is on the cytoplasmic side. A disordered region spans residues Thr-1129 to Val-1163. An III repeat occupies Arg-1200 to Leu-1514. Residues Trp-1219–Phe-1237 form a helical membrane-spanning segment. The Extracellular portion of the chain corresponds to Glu-1238–Thr-1250. The chain crosses the membrane as a helical span at residues Met-1251 to Tyr-1276. At Gln-1277–Thr-1278 the chain is on the cytoplasmic side. Residues Tyr-1279–Leu-1304 form a helical membrane-spanning segment. The Extracellular portion of the chain corresponds to Gly-1305–Lys-1313. Residues Ser-1314 to Gly-1332 form a helical membrane-spanning segment. At Met-1333–Pro-1345 the chain is on the cytoplasmic side. Residues Ser-1346–Phe-1369 form a helical membrane-spanning segment. Topologically, residues Ala-1370 to Phe-1415 are extracellular. An intrachain disulfide couples Cys-1376 to Cys-1396. 3 N-linked (GlcNAc...) asparagine glycosylation sites follow: Asn-1378, Asn-1392, and Asn-1403. The pore-forming intramembrane region spans Asp-1416–Gly-1433. The Extracellular segment spans residues Trp-1434–Leu-1457. The chain crosses the membrane as a helical span at residues Tyr-1458 to Ile-1483. The Cytoplasmic segment spans residues Asp-1484–Gln-1541. A Phosphoserine; by PKC modification is found at Ser-1516. An IV repeat occupies Ile-1523–Gln-1821. Residues Val-1542–Val-1560 traverse the membrane as a helical segment. The Extracellular segment spans residues Glu-1561 to Thr-1571. Residues Glu-1561 to Thr-1571 form an S1-S2 loop of repeat IV region. A helical transmembrane segment spans residues Ile-1572 to Ile-1593. The Cytoplasmic portion of the chain corresponds to Ser-1594–Thr-1601. A helical transmembrane segment spans residues Ile-1602–Glu-1623. The interval Met-1619–Arg-1636 is S3b-S4 loop of repeat IV. The Extracellular portion of the chain corresponds to Leu-1624 to Arg-1636. Residues Val-1637–Gly-1655 form a helical membrane-spanning segment. Residues Ile-1656 to Met-1665 lie on the Cytoplasmic side of the membrane. A helical transmembrane segment spans residues Ser-1666–Gly-1688. The Extracellular portion of the chain corresponds to Met-1689–Gly-1711. Residues Asn-1712 to Trp-1726 constitute an intramembrane region (pore-forming). The Extracellular segment spans residues Asp-1727–Pro-1759. Residues Cys-1741 and Cys-1756 are joined by a disulfide bond. Residues Ser-1760–Asn-1788 traverse the membrane as a helical segment. The Cytoplasmic segment spans residues Phe-1789–Lys-2009. In terms of domain architecture, IQ spans Glu-1915–Lys-1944. Residues Tyr-1986 to Lys-2009 form a disordered region. The span at Arg-1988–Lys-2009 shows a compositional bias: basic and acidic residues.

The protein belongs to the sodium channel (TC 1.A.1.10) family. Nav1.1/SCN1A subfamily. As to quaternary structure, the Nav1.1 voltage-gated sodium channel consists of an ion-conducting alpha subunit SCN1A which is functional on its own regulated by one or more beta-1 (SCN1B), beta-2 (SCN2B), beta-3 (SCN3B) and beta-4 (SCN4B) subunits. SCN1B and SCN3B are non-covalently associated with SCN1A. SCN2B and SCN4B are disulfide-linked to SCN1A. SCN1B regulates both the expression at the plasma membrane and the voltage dependence of Nav1.1 inactivation. SCN3B and SCN4B reduce Nav1.1 conductance. Probably interacts with TMEM233; modulates the gating properties of NaV1.1. Interacts with FGF13; regulates the steady-state inactivation of Nav.1.1. Post-translationally, phosphorylation at Ser-1516 by PKC in a highly conserved cytoplasmic loop slows inactivation of the sodium channel and reduces peak sodium currents.

It localises to the cell membrane. The catalysed reaction is Na(+)(in) = Na(+)(out). Activated by the spider toxins Hm1a and Hm1b (H.maculata, AC P60992 and AC P0DOC5) eliciting acute pain and mechanical allodynia. Inhibited by the conotoxin GVIIJ. Inhibited by the spider beta/delta-theraphotoxin-Pre1a. Functionally, pore-forming subunit of Nav1.1, a voltage-gated sodium (Nav) channel that directly mediates the depolarizing phase of action potentials in excitable membranes. Navs, also called VGSCs (voltage-gated sodium channels) or VDSCs (voltage-dependent sodium channels), operate by switching between closed and open conformations depending on the voltage difference across the membrane. In the open conformation they allow Na(+) ions to selectively pass through the pore, along their electrochemical gradient. The influx of Na(+) ions provokes membrane depolarization, initiating the propagation of electrical signals throughout cells and tissues. By regulating the excitability of neurons, ensures that they respond appropriately to synaptic inputs, maintaining the balance between excitation and inhibition in brain neural circuits. Nav1.1 plays a role in controlling the excitability and action potential propagation from somatosensory neurons, thereby contributing to the sensory perception of mechanically-induced pain. The polypeptide is Sodium channel protein type 1 subunit alpha (Homo sapiens (Human)).